The sequence spans 466 residues: Prophage integrase IntF (466 aa).

A Core-binding (CB) domain is found at lysine 134–asparagine 239. The region spanning lysine 268 to glutamate 445 is the Tyr recombinase domain. Catalysis depends on residues arginine 306, lysine 328, histidine 396, arginine 399, and histidine 422. Catalysis depends on tyrosine 432, which acts as the O-(3'-phospho-DNA)-tyrosine intermediate.

The protein belongs to the 'phage' integrase family.

Integrase is necessary for integration of the phage into the host genome by site-specific recombination. In conjunction with excisionase, integrase is also necessary for excision of the prophage from the host genome. The protein is Prophage integrase IntF (intF) of Escherichia coli (strain K12).